The sequence spans 60 residues: MRARSAIFSRTSLSLCSARLLASSQWVPSSSRSSSAISSRLKPSRWADFTKRTRVTSASP.

The polypeptide is Putative mercuric resistance protein (Pseudomonas aeruginosa).